Reading from the N-terminus, the 358-residue chain is Gentisate 1,2-dioxygenase (358 aa).

Residues 239-358 (QTLRQRAEND…AFNFYAEAEP (120 aa)) enclose the Cupin type-1 domain.

The protein belongs to the gentisate 1,2-dioxygenase family. As to quaternary structure, homotetramer.

It carries out the reaction 2,5-dihydroxybenzoate + O2 = 3-maleylpyruvate + H(+). The protein operates within aromatic compound metabolism; naphthalene degradation. With respect to regulation, inhibited by 2,2'-dipyridyl. In terms of biological role, catalyzes the oxygen-dependent ring fission of gentisate between the carboxyl and proximal hydroxyl groups at positions 1 and 2 of the aromatic ring to form maleylpyruvate. No activity with cathechol and protecatechuate as substrates. Part of a 3-hydroxybenzoic acid-degradation pathway. The chain is Gentisate 1,2-dioxygenase (gdoA) from Haloferax sp.